Here is a 476-residue protein sequence, read N- to C-terminus: MKITLPEYDKAQVLVVGDVMLDRYWHGPTARISPEAPVPVVKVEQIEERPGGAANVALNVAALGGKVNLIGLVGDDEAANVLVKNLKSVHVNTDFVSVPNFPTITKLRVLSRHQQLLRLDFEEGFEGIDSTDILEKMHASLTRQPSVVILSDYNKGSLADVQKMIQLAKKFNSVVLVDPKGSEFEKYRGATLLTPNLAEFEAVVGKCHSEKELVERGLALIKELDLDALLVTRSEHGMTLLREGQEPLHLPTQAQEVYDVTGAGDTVISVLASSLAAGSSFEQACTLANAAAGVVVGKIGTSTVNTIELANAVYSQQEIGFGVLSEEQLKLAVKLAQHRGEKVVMTNGCFDILHAGHVSYLNTAREQGNRLIVAVNSDQSVRNLKGQGRPVNPVDRRMAVLAGLGAVDWVIEFTEETPQRLIAEILPDLLVKGGDYLPEDIAGGKEVIANGGEVRVLQFEEGCSTSEIIKTIRNNS.

The interval 1–319 (MKITLPEYDK…ANAVYSQQEI (319 aa)) is ribokinase. Position 196-199 (196-199 (NLAE)) interacts with ATP. Residue Asp-265 is part of the active site. Residues 345 to 476 (MTNGCFDILH…EIIKTIRNNS (132 aa)) are cytidylyltransferase.

In the N-terminal section; belongs to the carbohydrate kinase PfkB family. The protein in the C-terminal section; belongs to the cytidylyltransferase family. Homodimer.

The catalysed reaction is D-glycero-beta-D-manno-heptose 7-phosphate + ATP = D-glycero-beta-D-manno-heptose 1,7-bisphosphate + ADP + H(+). It carries out the reaction D-glycero-beta-D-manno-heptose 1-phosphate + ATP + H(+) = ADP-D-glycero-beta-D-manno-heptose + diphosphate. It participates in nucleotide-sugar biosynthesis; ADP-L-glycero-beta-D-manno-heptose biosynthesis; ADP-L-glycero-beta-D-manno-heptose from D-glycero-beta-D-manno-heptose 7-phosphate: step 1/4. Its pathway is nucleotide-sugar biosynthesis; ADP-L-glycero-beta-D-manno-heptose biosynthesis; ADP-L-glycero-beta-D-manno-heptose from D-glycero-beta-D-manno-heptose 7-phosphate: step 3/4. In terms of biological role, catalyzes the phosphorylation of D-glycero-D-manno-heptose 7-phosphate at the C-1 position to selectively form D-glycero-beta-D-manno-heptose-1,7-bisphosphate. Functionally, catalyzes the ADP transfer from ATP to D-glycero-beta-D-manno-heptose 1-phosphate, yielding ADP-D-glycero-beta-D-manno-heptose. The polypeptide is Bifunctional protein HldE (Psychromonas ingrahamii (strain DSM 17664 / CCUG 51855 / 37)).